Reading from the N-terminus, the 287-residue chain is UPF0761 membrane protein MS0032 (287 aa).

6 helical membrane-spanning segments follow: residues 37 to 57 (MLAI…FPMF), 93 to 113 (SMSA…INQI), 128 to 148 (FIFS…FIGM), 174 to 194 (LLSF…YTLV), 204 to 224 (AAVG…AFAW), and 238 to 258 (AMAT…FILL).

The protein belongs to the UPF0761 family.

The protein localises to the cell inner membrane. The sequence is that of UPF0761 membrane protein MS0032 from Mannheimia succiniciproducens (strain KCTC 0769BP / MBEL55E).